The chain runs to 416 residues: UDP-N-acetylglucosamine 1-carboxyvinyltransferase (416 aa).

22 to 23 lines the phosphoenolpyruvate pocket; it reads KN. A UDP-N-acetyl-alpha-D-glucosamine-binding site is contributed by Arg-92. The Proton donor role is filled by Cys-116. Cys-116 carries the 2-(S-cysteinyl)pyruvic acid O-phosphothioketal modification. UDP-N-acetyl-alpha-D-glucosamine-binding positions include 121–125, Asp-304, and Ile-326; that span reads RPIDQ.

It belongs to the EPSP synthase family. MurA subfamily.

The protein localises to the cytoplasm. It catalyses the reaction phosphoenolpyruvate + UDP-N-acetyl-alpha-D-glucosamine = UDP-N-acetyl-3-O-(1-carboxyvinyl)-alpha-D-glucosamine + phosphate. Its pathway is cell wall biogenesis; peptidoglycan biosynthesis. Cell wall formation. Adds enolpyruvyl to UDP-N-acetylglucosamine. This is UDP-N-acetylglucosamine 1-carboxyvinyltransferase from Desulfatibacillum aliphaticivorans.